The primary structure comprises 262 residues: Ribosomal RNA small subunit methyltransferase A (262 aa).

The S-adenosyl-L-methionine site is built by N13, L15, G40, E61, D85, and N104.

This sequence belongs to the class I-like SAM-binding methyltransferase superfamily. rRNA adenine N(6)-methyltransferase family. RsmA subfamily.

It is found in the cytoplasm. The catalysed reaction is adenosine(1518)/adenosine(1519) in 16S rRNA + 4 S-adenosyl-L-methionine = N(6)-dimethyladenosine(1518)/N(6)-dimethyladenosine(1519) in 16S rRNA + 4 S-adenosyl-L-homocysteine + 4 H(+). Specifically dimethylates two adjacent adenosines (A1518 and A1519) in the loop of a conserved hairpin near the 3'-end of 16S rRNA in the 30S particle. May play a critical role in biogenesis of 30S subunits. This is Ribosomal RNA small subunit methyltransferase A from Chromobacterium violaceum (strain ATCC 12472 / DSM 30191 / JCM 1249 / CCUG 213 / NBRC 12614 / NCIMB 9131 / NCTC 9757 / MK).